Here is a 301-residue protein sequence, read N- to C-terminus: Ribosomal RNA large subunit methyltransferase F (301 aa).

Belongs to the methyltransferase superfamily. METTL16/RlmF family.

It localises to the cytoplasm. It carries out the reaction adenosine(1618) in 23S rRNA + S-adenosyl-L-methionine = N(6)-methyladenosine(1618) in 23S rRNA + S-adenosyl-L-homocysteine + H(+). In terms of biological role, specifically methylates the adenine in position 1618 of 23S rRNA. This Colwellia psychrerythraea (strain 34H / ATCC BAA-681) (Vibrio psychroerythus) protein is Ribosomal RNA large subunit methyltransferase F.